The chain runs to 228 residues: HTH-type transcriptional activator FasR (228 aa).

Residues 1–39 (MSDLAKTAQRRALRSSGSARPDEDVPAPNRRGNRLPRDE) are disordered. An HTH tetR-type domain is found at 38–98 (DERRGQLLVV…AVLHRHVENL (61 aa)). Positions 61–80 (GMDEIADRAGVSKPVLYQHF) form a DNA-binding region, H-T-H motif.

Homodimer.

FasR:DNA binding is regulated by long-chain acyl-CoAs (C14- to C26-CoA), which act as effector molecules that modulate the affinity of FasR for its DNA binding sequences and therefore modulate the expression of the essential fas-acpS operon. FasR activity is not affected by mycolic acid biosynthesis intermediates. Its function is as follows. Transcriptional activator that plays a central role in sensing mycobacterial long-chain fatty acids and regulating lipid biosynthesis. Activates the expression of the genes encoding the fatty acid synthase (fas) and the 4-phosphopantetheinyl transferase (acpS), whose products are involved in the fatty acid and mycolic acid biosynthesis. Specifically binds to three conserved operator sequences present in the fas-acpS promoter region. Not essential for M.tuberculosis viability, although it is required for the optimal growth in vitro and for virulence in macrophages and in a mouse model of infection. The chain is HTH-type transcriptional activator FasR from Mycobacterium tuberculosis (strain ATCC 25618 / H37Rv).